The chain runs to 198 residues: FMN-dependent NADH:quinone oxidoreductase (198 aa).

FMN contacts are provided by residues Ser-10, 16–18, 94–97, and 138–141; these read SQS, MYNF, and TRGG.

The protein belongs to the azoreductase type 1 family. As to quaternary structure, homodimer. It depends on FMN as a cofactor.

The catalysed reaction is 2 a quinone + NADH + H(+) = 2 a 1,4-benzosemiquinone + NAD(+). It catalyses the reaction N,N-dimethyl-1,4-phenylenediamine + anthranilate + 2 NAD(+) = 2-(4-dimethylaminophenyl)diazenylbenzoate + 2 NADH + 2 H(+). Its function is as follows. Quinone reductase that provides resistance to thiol-specific stress caused by electrophilic quinones. Also exhibits azoreductase activity. Catalyzes the reductive cleavage of the azo bond in aromatic azo compounds to the corresponding amines. The chain is FMN-dependent NADH:quinone oxidoreductase from Shewanella oneidensis (strain ATCC 700550 / JCM 31522 / CIP 106686 / LMG 19005 / NCIMB 14063 / MR-1).